Reading from the N-terminus, the 444-residue chain is Probable glycine dehydrogenase (decarboxylating) subunit 1 (444 aa).

Belongs to the GcvP family. N-terminal subunit subfamily. The glycine cleavage system is composed of four proteins: P, T, L and H. In this organism, the P 'protein' is a heterodimer of two subunits.

The catalysed reaction is N(6)-[(R)-lipoyl]-L-lysyl-[glycine-cleavage complex H protein] + glycine + H(+) = N(6)-[(R)-S(8)-aminomethyldihydrolipoyl]-L-lysyl-[glycine-cleavage complex H protein] + CO2. The glycine cleavage system catalyzes the degradation of glycine. The P protein binds the alpha-amino group of glycine through its pyridoxal phosphate cofactor; CO(2) is released and the remaining methylamine moiety is then transferred to the lipoamide cofactor of the H protein. The chain is Probable glycine dehydrogenase (decarboxylating) subunit 1 from Chlorobium phaeobacteroides (strain DSM 266 / SMG 266 / 2430).